The chain runs to 448 residues: Iroquois-class homeodomain protein irx-3 (448 aa).

A DNA-binding region (homeobox; TALE-type) is located at residues Asp108–Asn170. Disordered stretches follow at residues Lys171 to Glu250 and Ser387 to Ser410. Acidic residues predominate over residues Lys195–Asp222. Over residues Thr223–Ser237 the composition is skewed to basic and acidic residues. Residues Glu238–Ala248 show a composition bias toward acidic residues. The segment covering Ala396 to Thr406 has biased composition (basic and acidic residues).

The protein belongs to the TALE/IRO homeobox family. As to expression, expressed in the neural plate in overlapping patterns with other irx members, which all share an anterior border of expression. Outside the nervous system and at tailbud stages, expressed in the developing otic vesicle, branchial arches, prospective heart region and pronephros.

It localises to the nucleus. Functionally, acts partially redundantly with other irx members in neural patterning. Required for formation of the posterior forebrain, midbrain, hindbrain, and to a lesser extent, spinal cord. Both up-regulates and down-regulates gene expression during neural development. Acts early in neural plate development to induce proneural gene expression and specify a neural precursor state. Also up-regulates repressors that prevent neuronal differentiation. Required during at least two stages of pronephros kidney development; during neurula stages, maintains transcription of key renal genes to define the size and identity of the pronephric anlage, probably in part through regulation of bmp-signaling. Subsequently required for proper formation of the intermediate tubule segment of the pronephros. This is Iroquois-class homeodomain protein irx-3 from Xenopus tropicalis (Western clawed frog).